The following is a 187-amino-acid chain: Accessory gene regulator protein B (187 aa).

The next 5 helical transmembrane spans lie at 49 to 69 (IAYI…FYLI), 82 to 102 (FWCY…VLHF), 107 to 127 (TLMM…APAA), 143 to 163 (YFSI…KEPY), and 164 to 184 (TQFI…IYYS).

Belongs to the AgrB family.

It is found in the cell membrane. In terms of biological role, essential for the production of a quorum sensing system signal molecule, the autoinducing peptide (AIP). This quorum sensing system is responsible for the regulation of the expression of virulence factor genes. Involved in the proteolytic processing of AgrD, the precursor of AIP. This chain is Accessory gene regulator protein B, found in Staphylococcus aureus (strain MW2).